Consider the following 301-residue polypeptide: Protein SCO2, mitochondrial (301 aa).

Residues 82–98 (ATIALLLLSGGTYAYLS) traverse the membrane as a helical segment. Residues 101 to 284 (RRLLETEKEA…IREQIQAYVP (184 aa)) form the Thioredoxin domain. Positions 154, 158, and 245 each coordinate Cu cation.

It belongs to the SCO1/2 family.

It is found in the mitochondrion inner membrane. Functionally, acts as a copper chaperone, transporting copper to the Cu(A) site on the cytochrome c oxidase subunit II (COX2). The chain is Protein SCO2, mitochondrial (SCO2) from Saccharomyces cerevisiae (strain ATCC 204508 / S288c) (Baker's yeast).